A 229-amino-acid chain; its full sequence is Flavin-dependent thymidylate synthase (229 aa).

Residues 1 to 217 form the ThyX domain; sequence MEFKVLDKGF…PWTFESFLKF (217 aa). Residues Thr55, 78-80, and Glu86 contribute to the FAD site; that span reads RHR. DUMP is bound by residues 75–78, 86–90, and Arg156; these read QWFR and EASLR. The short motif at 78–88 is the ThyX motif element; sequence RHRIGSFNEAS. Residues 172–174 and Asn178 contribute to the FAD site; that span reads NAR. Arg183 provides a ligand contact to dUMP. Arg183 functions as the Involved in ionization of N3 of dUMP, leading to its activation in the catalytic mechanism.

The protein belongs to the thymidylate synthase ThyX family. Homotetramer. The cofactor is FAD.

It catalyses the reaction dUMP + (6R)-5,10-methylene-5,6,7,8-tetrahydrofolate + NADPH + H(+) = dTMP + (6S)-5,6,7,8-tetrahydrofolate + NADP(+). Its pathway is pyrimidine metabolism; dTTP biosynthesis. Catalyzes the reductive methylation of 2'-deoxyuridine-5'-monophosphate (dUMP) to 2'-deoxythymidine-5'-monophosphate (dTMP) while utilizing 5,10-methylenetetrahydrofolate (mTHF) as the methyl donor, and NADPH and FADH(2) as the reductant. This is Flavin-dependent thymidylate synthase from Thermosipho melanesiensis (strain DSM 12029 / CIP 104789 / BI429).